A 351-amino-acid polypeptide reads, in one-letter code: F-box protein At1g70590 (351 aa).

The tract at residues 1 to 60 (MKQRTWPCRSEGSRFSSLSFLKPHDKDKRSRISSINKATAKSTTSSRSSSSSSSSRPPSN) is disordered. A compositionally biased stretch (polar residues) spans 32–41 (ISSINKATAK). Residues 42–59 (STTSSRSSSSSSSSRPPS) are compositionally biased toward low complexity. Residues 62–111 (FGDFSMLPYDILMKIAAPFSHPNLQAASLVCKSWRDALKPLRESMLLIRW) enclose the F-box domain. The Sel1-like repeat unit spans residues 105–141 (SMLLIRWGKKYKHGRGGVRANLDKALDSFLKGAMRGS). One copy of the TPR repeat lies at 142–175 (TLAMVDAGLVYWERGEKEKAVNLYRRASELGDAV).

The chain is F-box protein At1g70590 from Arabidopsis thaliana (Mouse-ear cress).